The sequence spans 493 residues: Dipeptide permease D (493 aa).

Transmembrane regions (helical) follow at residues 14–34, 49–69, 91–111, 138–158, 167–187, 212–232, 235–255, 267–287, 312–332, 344–364, 379–399, 413–433, and 458–478; these read VVALQIWEYFSFYGMRALLIL, ELFSAYCSLVYVTPILGGYLA, LVLGASEIAPTFLYLSLAIIV, GGFSLLYAAGNIGSIVAPIAC, WAMGFALAAIGMLAGLVIFLC, NWGWLLILLVAAPLLITVLFW, WSVYALIVATAIGLVVLAKIY, LGLIVTLTLFSMLFWAFAQQG, MFQSVNAFAVMLCGVVLAWLV, IWGKFALGLGLMSAGFCILTL, LMVLGLAVMGFAELFIDPVAM, VLTGIYMLLSGAIANYLAGVI, and VFEQITWGALACVGVVLLIWL.

The protein belongs to the major facilitator superfamily. Proton-dependent oligopeptide transporter (POT/PTR) (TC 2.A.17) family. DtpD subfamily.

Its subcellular location is the cell inner membrane. Probable proton-dependent permease that transports dipeptides. The chain is Dipeptide permease D from Salmonella typhimurium (strain 14028s / SGSC 2262).